Reading from the N-terminus, the 237-residue chain is Probable GTP-binding protein EngB (237 aa).

The region spanning T13–Y188 is the EngB-type G domain. GTP is bound by residues G21 to S28, G48 to M52, D67 to G70, T134 to D137, and F167 to S169. The Mg(2+) site is built by S28 and T50. Over residues D207 to S220 the composition is skewed to acidic residues. Residues D207 to I237 are disordered. Residues I227 to I237 are compositionally biased toward basic and acidic residues.

This sequence belongs to the TRAFAC class TrmE-Era-EngA-EngB-Septin-like GTPase superfamily. EngB GTPase family. Mg(2+) is required as a cofactor.

Functionally, necessary for normal cell division and for the maintenance of normal septation. The polypeptide is Probable GTP-binding protein EngB (Acinetobacter baylyi (strain ATCC 33305 / BD413 / ADP1)).